The following is a 367-amino-acid chain: MQVRTPFVALDQRSPLTVDSSCPKRKKCDMDRERERDVKALEPRDLSSTGRIYARSDIKISSSPTVSPTISNSSSPTPTPPASSSVTPLGLPGAVAAAAAAVGGASSAGASSYLHGNHKPITGIPCVAAASRYTAPVHIDVGGTIYTSSLETLTKYPESKLAKLFNGQIPIVLDSLKQHYFIDRDGGMFRHILNFMRNSRLLIAEDFPDLELLLEEARYYEVEPMIKQLESMRKDRVRNGNYLVAPPTPPARHIKTSPRTSASPECNYEVVALHISPDLGERIMLSAERALLDELFPEASQATQSSRSGVSWNQGDWGQIIRFPLNGYCKLNSVQVLTRLLNAGFTIEASVGGQQFSEYLLARRVPM.

2 disordered regions span residues 16–46 and 62–87; these read LTVD…PRDL and SSPT…SSVT. Positions 28–45 are enriched in basic and acidic residues; that stretch reads CDMDRERERDVKALEPRD. One can recognise a BTB domain in the interval 135–205; that stretch reads APVHIDVGGT…MRNSRLLIAE (71 aa). The segment at 240 to 261 is disordered; the sequence is GNYLVAPPTPPARHIKTSPRTS.

Functionally, functions with the transcription factor TfAP-2 to regulate octopamine neuronal signaling pathways that control behaviors such as male aggression, male mating, and the initiation of feeding. Required for TfAP-2 transcriptional activity in octopaminergic neurons. Functions with TfAP-2 to regulate expression of genes which are involved in promoting octopamine production and secretion from octopaminergic neurons, such as Tbh and Vmat. Octopamine then modulates feeding and male aggression by regulating the expression of the satiation hormone Dsk in insulin-producing cells (IPCs). Functions with octopamine and Dsk as part of a negative feedback loop to prevent overeating; acts with TfAP-2 to regulate octopamine signaling pathways that initiate feeding, then octopamine activates expression of Dsk which inhibits consummatory behavior. May also be involved in negatively regulating nociception in larvae to prevent spontaneous pain and hyperalgesia. The sequence is that of BTB/POZ domain-containing protein Tiwaz from Drosophila melanogaster (Fruit fly).